Here is a 419-residue protein sequence, read N- to C-terminus: MTTQLEQAWELAKQRFAAVGIDVEEALRQLDRLPVSMHCWQGDDVSGFENPEGSLTGGIQATGNYPGKARNASELRADLEQAMRLIPGPKRLNLHAIYLESDTPVSRDQITPEHFKNWVEWAKANQLGLDFNPSCFSHPLSADGFTLSHADDRIRQFWIDHCKASRRVSAYFGEQLGTPSVMNIWIPDGMKDITVDRLAPRQRLLAALDEVISEKLNPAHHIDAVESKLFGIGAESYTVGSNEFYLGYATSRQTALCLDAGHFHPTEVISDKISAAMLYVPQLLLHVSRPVRWDSDHVVLLDDETQAIASEIVRHDLFDRVHIGLDFFDASINRIAAWVIGTRNMKKALLRALLEPTAELRKLESAGDYTARLALLEEQKSLPWQAVWEMYCQRHDTPAGSEWLENVRTYEKEILSRRG.

Positions 262, 294, and 296 each coordinate Mn(2+).

It belongs to the rhamnose isomerase family. As to quaternary structure, homotetramer. It depends on Mn(2+) as a cofactor.

It localises to the cytoplasm. The enzyme catalyses L-rhamnopyranose = L-rhamnulose. It functions in the pathway carbohydrate degradation; L-rhamnose degradation; glycerone phosphate from L-rhamnose: step 1/3. In terms of biological role, catalyzes the interconversion of L-rhamnose and L-rhamnulose. This chain is L-rhamnose isomerase, found in Escherichia coli O127:H6 (strain E2348/69 / EPEC).